A 222-amino-acid chain; its full sequence is Thiol:disulfide interchange protein DsbL (222 aa).

An N-terminal signal peptide occupies residues 1–27; the sequence is MSKLGISSLFKTILLTAALAVSFTASA. One can recognise a Thioredoxin domain in the interval 28 to 221; the sequence is FTEGTDYMVL…MADLIRELAS (194 aa). Cysteine 56 and cysteine 59 are disulfide-bonded.

The protein belongs to the thioredoxin family. DsbL subfamily. In terms of assembly, interacts with DsbI.

The protein localises to the periplasm. Functionally, involved in disulfide-bond formation. Acts by transferring its disulfide bond to other proteins. Part of a redox system composed of DsbI and DsbL that mediates formation of an essential disulfide bond in AssT. This Escherichia coli O6:H1 (strain CFT073 / ATCC 700928 / UPEC) protein is Thiol:disulfide interchange protein DsbL.